A 297-amino-acid chain; its full sequence is 1D-myo-inositol 2-acetamido-2-deoxy-alpha-D-glucopyranoside deacetylase (297 aa).

Zn(2+)-binding residues include His11, Asp14, and His154.

The protein belongs to the MshB deacetylase family. Requires Zn(2+) as cofactor.

It carries out the reaction 1D-myo-inositol 2-acetamido-2-deoxy-alpha-D-glucopyranoside + H2O = 1D-myo-inositol 2-amino-2-deoxy-alpha-D-glucopyranoside + acetate. In terms of biological role, catalyzes the deacetylation of 1D-myo-inositol 2-acetamido-2-deoxy-alpha-D-glucopyranoside (GlcNAc-Ins) in the mycothiol biosynthesis pathway. In Tsukamurella paurometabola (strain ATCC 8368 / DSM 20162 / CCUG 35730 / CIP 100753 / JCM 10117 / KCTC 9821 / NBRC 16120 / NCIMB 702349 / NCTC 13040) (Corynebacterium paurometabolum), this protein is 1D-myo-inositol 2-acetamido-2-deoxy-alpha-D-glucopyranoside deacetylase.